We begin with the raw amino-acid sequence, 414 residues long: Bystin (414 aa).

The span at 1–11 (MSAKRNTKLRH) shows a compositional bias: basic residues. The interval 1 to 91 (MSAKRNTKLR…PSDDEGQADD (91 aa)) is disordered. A compositionally biased stretch (basic and acidic residues) spans 12-24 (APLEHAYVDDKSV). Basic residues predominate over residues 25-34 (RRNKRSKQRG).

It belongs to the bystin family.

It localises to the nucleus. It is found in the nucleolus. Required for processing of 20S pre-rRNA precursor and biogenesis of 40S ribosomal subunits. In Monosiga brevicollis (Choanoflagellate), this protein is Bystin (bysl).